Here is a 550-residue protein sequence, read N- to C-terminus: Methionine--tRNA ligase (550 aa).

Positions 13–23 match the 'HIGH' region motif; sequence PYANGPLHFGH. 4 residues coordinate Zn(2+): Cys145, Cys148, Cys158, and Cys161. The short motif at 331-335 is the 'KMSKS' region element; that stretch reads QFSKS. ATP is bound at residue Lys334.

It belongs to the class-I aminoacyl-tRNA synthetase family. MetG type 1 subfamily. Monomer. Requires Zn(2+) as cofactor.

It is found in the cytoplasm. It carries out the reaction tRNA(Met) + L-methionine + ATP = L-methionyl-tRNA(Met) + AMP + diphosphate. In terms of biological role, is required not only for elongation of protein synthesis but also for the initiation of all mRNA translation through initiator tRNA(fMet) aminoacylation. This is Methionine--tRNA ligase (metG) from Chlamydia trachomatis serovar D (strain ATCC VR-885 / DSM 19411 / UW-3/Cx).